We begin with the raw amino-acid sequence, 1055 residues long: Elongation factor 3 (1055 aa).

Val45 contacts ADP. HEAT repeat units follow at residues 45–86, 96–133, 135–172, 175–213, 217–255, 257–290, and 295–337; these read VEFF…NGAA, SAEN…SMNP, ASFV…SAPY, GEAM…LVEN, EKFV…APTI, LIAP…LVDS, and RPFL…VPVE. ABC transporter domains follow at residues 447 to 659 and 687 to 1004; these read CNIE…SYYQ and LKMR…KKAG. Residues Asn723, Glu933, Asn936, and His962 each coordinate ADP. Disordered regions lie at residues 987 to 1006 and 1024 to 1055; these read HNWV…AGDD and EKKL…DEEL. Residues 1033–1044 are compositionally biased toward basic residues; that stretch reads RKAKKDRMARRK.

The protein belongs to the ABC transporter superfamily. ABCF family. EF3 subfamily. In terms of assembly, associates with ribosomes.

The protein localises to the cytoplasm. The protein resides in the cytosol. The enzyme catalyses ATP + H2O = ADP + phosphate + H(+). The protein operates within protein biosynthesis; polypeptide chain elongation. In terms of biological role, ribosome-dependent ATPase that functions in cytoplasmic translation elongation. Required for the ATP-dependent release of deacylated tRNA from the ribosomal E-site during protein biosynthesis. Stimulates the eEF1A-dependent binding of aminoacyl-tRNA to the ribosomal A-site, which has reduced affinity for tRNA as long as the E-site is occupied. Assists translation termination by stimulating the release of nascent protein from the ribosome by release factors. Appears to target calcium-channel protein CCH1 to the plasma membrane. The chain is Elongation factor 3 from Cryptococcus neoformans var. neoformans serotype D (strain JEC21 / ATCC MYA-565) (Filobasidiella neoformans).